The chain runs to 401 residues: Beta-lactamase (401 aa).

The N-terminal stretch at 1-39 (MKLFTSTLTAKKSSTHKPLISLALSVLISTLLISETAQA) is a signal peptide. The active-site Acyl-ester intermediate is serine 102. Residue tyrosine 188 is the Proton acceptor of the active site. 353–355 (KTG) lines the substrate pocket.

This sequence belongs to the class-C beta-lactamase family.

It is found in the secreted. The catalysed reaction is a beta-lactam + H2O = a substituted beta-amino acid. This protein is a serine beta-lactamase with a substrate specificity for cephalosporins. The chain is Beta-lactamase (ampC) from Psychrobacter immobilis.